Here is a 533-residue protein sequence, read N- to C-terminus: MFNRIRISTTLFLILILCGILQIGSNGMSFWAFRDDLQRLNQVEQSNQQRAALAQTRAVMLQASTALNKAGTLTALSYPADDIKTLMTTARASLTQSTTLFKSFMAMTAGNEHVRGLQKETEKSFARWHNDLEHQATWLESNQLSDFLTAPVQGSQNAFDVNFEAWQLEINHVLEAASAQSQRNYQISALVFISMIIVAAIYISSALWWTRKMIVQPLAIIGSHFDSIAAGNLARPIAVYGRNEITAIFASLKTMQQALRGTVSDVRKGSQEMHIGIAEIVAGNNDLSSRTEQQAASLAQTAASMEQLTATVGQNADNARQASELAKNAATTAQAGGVQVSTMTHTMQEIATSSQKIGDIISVIDGIAFQTNILALNAAVEAARAGEQGRGFAVVAGEVRNLASRSAQAAKEIKGLIEESVNRVQQGSKLVNNAAATMIDIVSSVTRVNDIMGEIASASEEQQRGIEQVAQAVSQMDQVTQQNASLVEEAAVATEQLANQADHLSSRVAVFTLEEHEVARHESVQLQIAPVVS.

At methionine 1–arginine 6 the chain is on the cytoplasmic side. A helical membrane pass occupies residues isoleucine 7–phenylalanine 33. Residues arginine 34–serine 188 are Periplasmic-facing. Residues alanine 189–tryptophan 209 form a helical membrane-spanning segment. Over threonine 210 to serine 533 the chain is Cytoplasmic. Residues lysine 212–serine 264 form the HAMP domain. Residues glycine 269–alanine 498 form the Methyl-accepting transducer domain. Glutamate methyl ester (Gln) occurs at positions 293, 300, and 307. Glutamate 489 is subject to Glutamate methyl ester (Glu).

This sequence belongs to the methyl-accepting chemotaxis (MCP) protein family.

Its subcellular location is the cell inner membrane. Its function is as follows. Mediates taxis toward dipeptides via an interaction with the periplasmic dipeptide-binding protein. Functionally, chemotactic-signal transducers respond to changes in the concentration of attractants and repellents in the environment, transduce a signal from the outside to the inside of the cell, and facilitate sensory adaptation through the variation of the level of methylation. Attractants increase the level of methylation while repellents decrease the level of methylation, the methyl groups are added by the methyltransferase CheR and removed by the methylesterase CheB. This Escherichia coli (strain K12) protein is Methyl-accepting chemotaxis protein IV (tap).